A 239-amino-acid chain; its full sequence is Tetratricopeptide repeat protein 9B (239 aa).

Residues Met-1–Ala-54 form a disordered region. Ser-7 and Ser-27 each carry phosphoserine. The span at Pro-16 to Gly-32 shows a compositional bias: pro residues. One copy of the TPR 1 repeat lies at Ala-63–Gln-97. The disordered stretch occupies residues Gly-98–Ser-121. Over residues Leu-104–Ser-114 the composition is skewed to pro residues. A TPR 2 repeat occupies Phe-169 to Asp-202.

Belongs to the TTC9 family.

The protein is Tetratricopeptide repeat protein 9B (Ttc9b) of Mus musculus (Mouse).